A 119-amino-acid chain; its full sequence is Beta-2-microglobulin (119 aa).

The signal sequence occupies residues Met-1–Ala-20. Positions Pro-25 to Lys-114 constitute an Ig-like C1-type domain. Residues Cys-45 and Cys-100 are joined by a disulfide bond.

Belongs to the beta-2-microglobulin family. In terms of assembly, heterodimer of an alpha chain and a beta chain. Beta-2-microglobulin is the beta-chain of major histocompatibility complex class I molecules.

The protein localises to the secreted. In terms of biological role, component of the class I major histocompatibility complex (MHC). Involved in the presentation of peptide antigens to the immune system. This chain is Beta-2-microglobulin (B2M), found in Cebuella pygmaea (Pygmy marmoset).